The sequence spans 117 residues: Reprimo-like protein (117 aa).

Residues 64–84 (VAQIAVLCVLSLTVVFGVFFL) traverse the membrane as a helical segment. Position 106 is a phosphoserine (serine 106).

It belongs to the reprimo family.

It localises to the membrane. In Mus musculus (Mouse), this protein is Reprimo-like protein (Rprml).